We begin with the raw amino-acid sequence, 240 residues long: Ribonuclease PH (240 aa).

Phosphate is bound by residues Arg-86 and Gly-124–Arg-126.

The protein belongs to the RNase PH family. In terms of assembly, homohexameric ring arranged as a trimer of dimers.

It carries out the reaction tRNA(n+1) + phosphate = tRNA(n) + a ribonucleoside 5'-diphosphate. Phosphorolytic 3'-5' exoribonuclease that plays an important role in tRNA 3'-end maturation. Removes nucleotide residues following the 3'-CCA terminus of tRNAs; can also add nucleotides to the ends of RNA molecules by using nucleoside diphosphates as substrates, but this may not be physiologically important. Probably plays a role in initiation of 16S rRNA degradation (leading to ribosome degradation) during starvation. In Rhodospirillum rubrum (strain ATCC 11170 / ATH 1.1.1 / DSM 467 / LMG 4362 / NCIMB 8255 / S1), this protein is Ribonuclease PH.